The primary structure comprises 295 residues: GATA transcription factor 18 (295 aa).

A GATA-type zinc finger spans residues 148-202 (SLLARRCANCDTTSTPLWRNGPRGPKSLCNACGIRFKKEERRTTAATGNTVVGAA).

Belongs to the type IV zinc-finger family. Class B subfamily. As to quaternary structure, homodimer. Forms heterodimers with GATA19, GATA22 and GATA21. Interacts with JAG. Binds to AGO10/PNH. As to expression, expressed in vegetative and inflorescence shoot apical meristems (SAMs), axillary (SAMs), floral meristems, developing ovules and stamens, vascular tissues, and in the embryo.

Its subcellular location is the nucleus. In terms of biological role, transcriptional factor that specifically binds 5'-GATA-3' or 5'-GAT-3' motifs within gene promoters (including its own promoter and GATA21 promoter), thus regulating the expression of genes mostly involved in hormone responses and floral organ specification (including genes regulating hormones responses). Regulates both flower and shoot apical meristem (SAM) development, especially for establishing organ boundaries in shoots and flowers, probably by controlling the number and position of WUS-expressing cells. Coregulates, with AGO10/PNH, the shoot apical meristem (SAM) organization. Regulates floral organ development via the promotion of JAG and NPR5/BOP2 expression. Modulates cytokinin homeostasis in organ boundaries by regulating CKX3 expression. Involved in cell proliferation and differentiation. Required to position the inductive proembryo boundary via the regulation of gene expression and for early embryonic development. Together with GIF1/AN3, mediates cotyledon identity by preventing ectopic root formation through the repression of PLT1 expression. This is GATA transcription factor 18 from Arabidopsis thaliana (Mouse-ear cress).